The chain runs to 331 residues: Tungstate uptake system ATP-binding protein TupC (331 aa).

The region spanning 2–230 (IEISNLFFNY…NQGVKFCNFI (229 aa)) is the ABC transporter domain. 34-41 (GANGSGKS) lines the ATP pocket.

Belongs to the ABC transporter superfamily. As to quaternary structure, the complex is composed of two ATP-binding proteins (TupC), two transmembrane proteins (TupB) and a solute-binding protein (TupA).

It catalyses the reaction tungstate(in) + ATP + H2O = tungstate(out) + ADP + phosphate + H(+). Part of an ABC transporter complex involved in ultra-high affinity tungstate uptake. Probably responsible for energy coupling to the transport system. The chain is Tungstate uptake system ATP-binding protein TupC from Campylobacter jejuni subsp. jejuni serotype O:2 (strain ATCC 700819 / NCTC 11168).